The primary structure comprises 953 residues: Nonsense-mediated mRNA decay factor SMG8 (953 aa).

Disordered regions lie at residues 571–604 (AQDA…CSQP) and 629–653 (PCFD…ESNN). Positions 574-586 (AELDPDEEDEELP) are enriched in acidic residues. Positions 595-604 (ITQSNGCSQP) are enriched in polar residues. A compositionally biased stretch (low complexity) spans 634 to 653 (SSSSEAESTCSGTSSEESNN).

Belongs to the SMG8 family.

Involved in nonsense-mediated decay (NMD) of mRNAs containing premature stop codons. Probable component of kinase complex containing nonC and recruited to stalled ribosomes. In Drosophila persimilis (Fruit fly), this protein is Nonsense-mediated mRNA decay factor SMG8.